The chain runs to 738 residues: Sporulation kinase E (738 aa).

PAS domains lie at Glu-29–Gly-99, Asn-150–Gly-220, Ser-271–Ile-342, and Ser-391–Met-462. A Histidine kinase domain is found at Gly-523 to Gln-729. His-526 bears the Phosphohistidine; by autocatalysis mark.

It catalyses the reaction ATP + protein L-histidine = ADP + protein N-phospho-L-histidine.. Phosphorylates the sporulation-regulatory protein spo0A under biofilm growth conditions. Also able to weakly phosphorylate spo0F. This is Sporulation kinase E (kinE) from Bacillus subtilis (strain 168).